The following is a 634-amino-acid chain: Phospholipase B (634 aa).

An N-terminal signal peptide occupies residues 1-19; it reads MSIITTAFALSLLATTAFA. The 524-residue stretch at 46–569 folds into the PLA2c domain; the sequence is DCPSNVTWIR…DTWCWAGDDN (524 aa). N-linked (GlcNAc...) asparagine glycosylation is found at Asn50, Asn56, Asn122, Asn231, Asn246, Asn269, Asn311, Asn340, Asn384, Asn430, Asn478, Asn498, Asn525, Asn550, Asn569, Asn591, and Asn603.

The protein belongs to the lysophospholipase family. Post-translationally, N-glycosylated.

The protein resides in the secreted. The catalysed reaction is a 1-acyl-sn-glycero-3-phosphocholine + H2O = sn-glycerol 3-phosphocholine + a fatty acid + H(+). Functionally, exhibits phospholipase B (PLB), lysophospholipase (LPL) and lysophospholipase/transacylase (LPTA) activities. The polypeptide is Phospholipase B (PLB1) (Cryptococcus neoformans var. neoformans serotype D (strain JEC21 / ATCC MYA-565) (Filobasidiella neoformans)).